The chain runs to 400 residues: Tyrosine-specific transport system 1 (400 aa).

Helical transmembrane passes span V5–L25, F34–V54, I80–G100, V117–V137, V143–I163, A176–P196, F211–T231, L250–V270, F273–I293, L313–L333, Y335–A355, and N370–I390.

This sequence belongs to the amino acid/polyamine transporter 2 family. Mtr/TnaB/TyrP permease subfamily.

It localises to the cell inner membrane. The enzyme catalyses L-tyrosine(in) + H(+)(in) = L-tyrosine(out) + H(+)(out). Functionally, transports tyrosine across the cytoplasmic membrane. The transport system is energized by the proton motive force. This Haemophilus influenzae (strain ATCC 51907 / DSM 11121 / KW20 / Rd) protein is Tyrosine-specific transport system 1 (tyrP-A).